Consider the following 460-residue polypeptide: U-box domain-containing protein 9 (460 aa).

Residues 73-147 form the U-box domain; sequence SCPEEFRCPL…SKWCKKNGLE (75 aa). ARM repeat units lie at residues 201-244, 248-287, and 289-328; these read TEFR…NISI, SNKKLVCENPNVIPLLIDALRRGTVATRSNAAAAIFTLSA, and DSNKVLIGKSGILKPLIDLLEEGNPLAIKDVAAAIFTLCI.

Binds to SD11, SD16, SD17, SD18, SD113, SD129 and SD25. Post-translationally, phosphorylated by SD1-6 and SD1-7.

The protein localises to the nucleus. The protein resides in the cell membrane. It catalyses the reaction S-ubiquitinyl-[E2 ubiquitin-conjugating enzyme]-L-cysteine + [acceptor protein]-L-lysine = [E2 ubiquitin-conjugating enzyme]-L-cysteine + N(6)-ubiquitinyl-[acceptor protein]-L-lysine.. It participates in protein modification; protein ubiquitination. Its function is as follows. Functions as an E3 ubiquitin ligase. May be involved in the abscisic acid-mediated signaling pathway, at least during germination. The sequence is that of U-box domain-containing protein 9 (PUB9) from Arabidopsis thaliana (Mouse-ear cress).